A 225-amino-acid chain; its full sequence is Dimerizing cyclase tstC (225 aa).

Residues 1–19 form the signal peptide; sequence MRLSTLSSLLLGSSSIVFA. N-linked (GlcNAc...) asparagine glycans are attached at residues Asn-146, Asn-195, and Asn-217.

The protein belongs to the dimerizing cyclase tstC family.

The catalysed reaction is 2 [4-(deca-1,8-diyl)-2,5-dioxo-2,5-dihydro-3-furanyl]acetate + H(+) = 2-[(1R,8S,14R,15R)-11-hydroxy-14,15-bis[(6E)-oct-6-en-1-yl]-3,5,9-trioxo-4,10-dioxatetracyclo[9.4.0.0(2,6).0(8,12)]pentadeca-2(6),12-dien-8-yl]acetate + CO2. It participates in secondary metabolite biosynthesis. Its function is as follows. Dimerizing cyclase; part of the gene cluster that mediates the biosynthesis of the antihypercholesterolemic agents phomoidrides which are dimeric anhydrides. Within the pathway, tstC produces the bicyclo[4.3.1]deca-1,6-diene core of phomoidrides via the dimerization of the monomeric anhydrides leading to prephomoidride. The pathway begins with the highly reducing polyketide synthase tstA that catalyzes the formation of a C12-fatty acyl-ACP, starting from one acetate and 5 malonate units. The hydrolase tstM is involved in the release of the C12-fatty acyl chain from phiA. The alkylcitrate synthase (ACS) tstJ and the alkylcitrate dehydratase (ACDH) tstI then give rise to decarboxylated monomeric anhydrides by coupling the C12-fatty acyl chain with oxalacetic acid. The cyclase tstC is responsible for the dimerization of the monomeric anhydrides which leads to the production of prephomoidride that contains the characteristic bicyclo[4.3.1]deca-1,6-diene system of phomoidrides. Iterative oxidation catalyzed by the alpha-ketoglutarate-dependent dioxygenase tstK produced then phomoidride A. Finally, the methyltransferase tstE converts phomoidride A to phomoidride B via an acetalization reaction. The phosphatidylethanolamine-binding protein tstB and tstN are not essential for dimerization and their functions have still to be determined. The protein is Dimerizing cyclase tstC of Talaromyces stipitatus (strain ATCC 10500 / CBS 375.48 / QM 6759 / NRRL 1006) (Penicillium stipitatum).